Reading from the N-terminus, the 133-residue chain is Ubiquitin-like FUBI-ribosomal protein eS30 fusion protein (133 aa).

Positions 1–74 constitute a Ubiquitin-like domain; the sequence is MQLFVRAQEL…LEVAGRMLGG (74 aa). A disordered region spans residues 84 to 110; the sequence is GKVRGQTPKVAKQEKKKKKTGRAKRRM. Residues 97–110 show a composition bias toward basic residues; the sequence is EKKKKKTGRAKRRM. The residue at position 125 (lysine 125) is an N6-succinyllysine.

It in the N-terminal section; belongs to the ubiquitin family. In the C-terminal section; belongs to the eukaryotic ribosomal protein eS30 family. In terms of assembly, component of the 40S subunit of the ribosome. Post-translationally, FUBI is cleaved from ribosomal protein S30 by the deubiquitinase USP36 before the assembly of ribosomal protein S30 into pre-40S ribosomal particles. FUBI removal from ribosomal protein S30 is a crucial event for the final maturation of pre-40S particles.

Its subcellular location is the cytoplasm. The protein localises to the nucleus. In terms of biological role, may have pro-apoptotic activity. Its function is as follows. Component of the 40S subunit of the ribosome. Contributes to the assembly and function of 40S ribosomal subunits. The polypeptide is Ubiquitin-like FUBI-ribosomal protein eS30 fusion protein (Homo sapiens (Human)).